Consider the following 174-residue polypeptide: Alpha-crystallin B chain (174 aa).

Residue methionine 1 is modified to N-acetylmethionine. Residues 55–163 enclose the sHSP domain; that stretch reads RMPSWLETGL…PERSIPITRE (109 aa). Residues histidine 82, histidine 103, glutamate 105, and histidine 110 each coordinate Zn(2+). Positions 148–174 are disordered; the sequence is RKQSDVPERSIPITREEKPAIAGSQRK. Positions 149 to 166 are enriched in basic and acidic residues; sequence KQSDVPERSIPITREEKP.

The protein belongs to the small heat shock protein (HSP20) family. In terms of assembly, heteromer composed of three CRYAA and one CRYAB subunits. Aggregates with homologous proteins, including the small heat shock protein HSPB1, to form large heteromeric complexes. Inter-subunit bridging via zinc ions enhances stability, which is crucial as there is no protein turn over in the lens. As to expression, lens as well as other tissues.

May contribute to the transparency and refractive index of the lens. This is Alpha-crystallin B chain (CRYAB) from Gallus gallus (Chicken).